The primary structure comprises 387 residues: MPNMAETKDPVRLRLLSLELLKQLWAGHEAMCRSVVRAASGSNLDCSSNNLEMPLSQETSSASSVAPSSQDKRHMLDPLDSRRDDTFDVAWYVKFNSRMDSFLPATGQHQEPQEELRPPSVPLLATQGLKGPVSLGGPKGLGPDKTQVPRSILSRLSKPSKPRVTSQESAVPESSWHSRPYLGYDWIAGSLDNSSPVTSEPEAFFSMLQRFRENNKEDCVCNSPEAVFPGLQESSGVEEDHECMYCYRINRRLFPEPVDPGAPCRLCGIPRDEKGPGTLVEPVQVRVSIPLSIMDPPHQYRIHRRKSFDASDTLALPRHCLLGWDILPPKSEKTSVPKSLDLWSSVSYGAGQRRDLSATSPPCQALPAQVTPPLWSEPQVAQLCPSH.

Polar residues predominate over residues 50-59; it reads NLEMPLSQET. Disordered regions lie at residues 50–80 and 133–172; these read NLEMPLSQETSSASSVAPSSQDKRHMLDPLD and VSLGGPKGLGPDKTQVPRSILSRLSKPSKPRVTSQESAVP. Over residues 60–69 the composition is skewed to low complexity; it reads SSASSVAPSS. Residues 70–80 are compositionally biased toward basic and acidic residues; that stretch reads QDKRHMLDPLD. At Ser-307 the chain carries Phosphoserine.

In terms of assembly, interacts with IGFBP2.

In terms of biological role, inhibits glioma cells invasion and down-regulates adhesion- and motility-associated genes such as NFKB2 and ICAM1. Exhibits opposing effects to IGFBP2 on cell invasion. The sequence is that of Migration and invasion-inhibitory protein (Miip) from Mus musculus (Mouse).